Here is a 150-residue protein sequence, read N- to C-terminus: Large ribosomal subunit protein bL9 (150 aa).

This sequence belongs to the bacterial ribosomal protein bL9 family.

In terms of biological role, binds to the 23S rRNA. The protein is Large ribosomal subunit protein bL9 of Janthinobacterium sp. (strain Marseille) (Minibacterium massiliensis).